The sequence spans 350 residues: Ketol-acid reductoisomerase (NADP(+)) (350 aa).

The KARI N-terminal Rossmann domain occupies 4–187; sequence VSITTDYSRM…GGARANIIKT (184 aa). NADP(+)-binding positions include 30 to 33, arginine 53, threonine 58, and 88 to 91; these read YGSQ and DMVQ. The active site involves histidine 113. Residue glycine 139 coordinates NADP(+). One can recognise a KARI C-terminal knotted domain in the interval 188–333; the sequence is TFKEETETDL…KQLRAKMVWL (146 aa). The Mg(2+) site is built by aspartate 196, glutamate 200, glutamate 232, and glutamate 236. Residue serine 257 coordinates substrate.

The protein belongs to the ketol-acid reductoisomerase family. Requires Mg(2+) as cofactor.

It carries out the reaction (2R)-2,3-dihydroxy-3-methylbutanoate + NADP(+) = (2S)-2-acetolactate + NADPH + H(+). The catalysed reaction is (2R,3R)-2,3-dihydroxy-3-methylpentanoate + NADP(+) = (S)-2-ethyl-2-hydroxy-3-oxobutanoate + NADPH + H(+). Its pathway is amino-acid biosynthesis; L-isoleucine biosynthesis; L-isoleucine from 2-oxobutanoate: step 2/4. The protein operates within amino-acid biosynthesis; L-valine biosynthesis; L-valine from pyruvate: step 2/4. Its function is as follows. Involved in the biosynthesis of branched-chain amino acids (BCAA). Catalyzes an alkyl-migration followed by a ketol-acid reduction of (S)-2-acetolactate (S2AL) to yield (R)-2,3-dihydroxy-isovalerate. In the isomerase reaction, S2AL is rearranged via a Mg-dependent methyl migration to produce 3-hydroxy-3-methyl-2-ketobutyrate (HMKB). In the reductase reaction, this 2-ketoacid undergoes a metal-dependent reduction by NADPH to yield (R)-2,3-dihydroxy-isovalerate. The protein is Ketol-acid reductoisomerase (NADP(+)) of Xylella fastidiosa (strain Temecula1 / ATCC 700964).